The primary structure comprises 65 residues: Large ribosomal subunit protein uL30 (65 aa).

The protein belongs to the universal ribosomal protein uL30 family. As to quaternary structure, part of the 50S ribosomal subunit.

This chain is Large ribosomal subunit protein uL30, found in Onion yellows phytoplasma (strain OY-M).